The primary structure comprises 629 residues: Probable alpha-L-arabinofuranosidase A (629 aa).

The first 25 residues, 1-25, serve as a signal peptide directing secretion; that stretch reads MVALSTLSGLSALPFLFSLVQNVYG. N-linked (GlcNAc...) asparagine glycosylation is found at asparagine 36, asparagine 51, asparagine 140, asparagine 152, asparagine 168, asparagine 171, asparagine 260, asparagine 494, and asparagine 534.

The protein belongs to the glycosyl hydrolase 51 family.

It localises to the secreted. The enzyme catalyses Hydrolysis of terminal non-reducing alpha-L-arabinofuranoside residues in alpha-L-arabinosides.. The protein operates within glycan metabolism; L-arabinan degradation. Its function is as follows. Alpha-L-arabinofuranosidase involved in the degradation of arabinoxylan, a major component of plant hemicellulose. Acts only on small linear 1,5-alpha-linked L-arabinofuranosyl oligosaccharides. The polypeptide is Probable alpha-L-arabinofuranosidase A (abfA) (Aspergillus oryzae (strain ATCC 42149 / RIB 40) (Yellow koji mold)).